A 451-amino-acid polypeptide reads, in one-letter code: Phosphoglucosamine mutase (451 aa).

Ser102 serves as the catalytic Phosphoserine intermediate. Positions 102, 243, 245, and 247 each coordinate Mg(2+). Ser102 carries the post-translational modification Phosphoserine.

Belongs to the phosphohexose mutase family. The cofactor is Mg(2+). Activated by phosphorylation.

It carries out the reaction alpha-D-glucosamine 1-phosphate = D-glucosamine 6-phosphate. Its function is as follows. Catalyzes the conversion of glucosamine-6-phosphate to glucosamine-1-phosphate. This chain is Phosphoglucosamine mutase, found in Paramagnetospirillum magneticum (strain ATCC 700264 / AMB-1) (Magnetospirillum magneticum).